The sequence spans 260 residues: Type III pantothenate kinase (260 aa).

Position 6-13 (6-13 (DAGNTRIK)) interacts with ATP. Substrate-binding positions include Tyr100 and 107–110 (GADR). Asp109 (proton acceptor) is an active-site residue. Position 133 (Thr133) interacts with ATP. Thr186 contributes to the substrate binding site.

Belongs to the type III pantothenate kinase family. As to quaternary structure, homodimer. The cofactor is NH4(+). K(+) is required as a cofactor.

It is found in the cytoplasm. The enzyme catalyses (R)-pantothenate + ATP = (R)-4'-phosphopantothenate + ADP + H(+). It functions in the pathway cofactor biosynthesis; coenzyme A biosynthesis; CoA from (R)-pantothenate: step 1/5. Catalyzes the phosphorylation of pantothenate (Pan), the first step in CoA biosynthesis. This chain is Type III pantothenate kinase, found in Janthinobacterium sp. (strain Marseille) (Minibacterium massiliensis).